The primary structure comprises 622 residues: Condensin-2 complex subunit H2 (622 aa).

Position 19 is a phosphothreonine (Thr-19). Ser-95, Ser-199, Ser-223, and Ser-227 each carry phosphoserine. The disordered stretch occupies residues 207-354; sequence WNPKEPGRAE…PGQKRKRKGA (148 aa). Low complexity predominate over residues 262 to 273; it reads AAEPPEASAPEV. Residue Ser-282 is modified to Phosphoserine. Positions 294 to 312 are enriched in basic and acidic residues; it reads TLRERKEAPEPASRLKDTP.

It belongs to the CND2 H2 (condensin-2 subunit 2) family. In terms of assembly, component of the condensin-2 complex, which contains the SMC2 and SMC4 heterodimer, and three non SMC subunits, NCAPG2, NCAPH2 and NCAPD3 that probably regulate the complex.

Its subcellular location is the nucleus. In terms of biological role, regulatory subunit of the condensin-2 complex, a complex that seems to provide chromosomes with an additional level of organization and rigidity and in establishing mitotic chromosome architecture. May promote the resolution of double-strand DNA catenanes (intertwines) between sister chromatids. Condensin-mediated compaction likely increases tension in catenated sister chromatids, providing directionality for type II topoisomerase-mediated strand exchanges toward chromatid decatenation. Required for decatenation of chromatin bridges at anaphase. Early in neurogenesis, may play an essential role to ensure accurate mitotic chromosome condensation in neuron stem cells, ultimately affecting neuron pool and cortex size. Seems to have lineage-specific role in T-cell development. The sequence is that of Condensin-2 complex subunit H2 (NCAPH2) from Bos taurus (Bovine).